We begin with the raw amino-acid sequence, 195 residues long: Probable GTP-binding protein EngB (195 aa).

In terms of domain architecture, EngB-type G spans 22-194 (LKGEVAFVGR…LDLISTLLKE (173 aa)). GTP-binding positions include 30–37 (GRSNVGKS), 56–60 (GKTRS), 74–77 (DLPG), 141–144 (TKMD), and 173–175 (TSS). The Mg(2+) site is built by S37 and T58.

It belongs to the TRAFAC class TrmE-Era-EngA-EngB-Septin-like GTPase superfamily. EngB GTPase family. Mg(2+) is required as a cofactor.

Necessary for normal cell division and for the maintenance of normal septation. This Thermotoga maritima (strain ATCC 43589 / DSM 3109 / JCM 10099 / NBRC 100826 / MSB8) protein is Probable GTP-binding protein EngB.